The primary structure comprises 566 residues: Solute carrier family 2, facilitated glucose transporter member 9 (566 aa).

Positions 1 to 31 (MARKQNRNSKELGLAPLADDTSHAGPPGPGR) are disordered. The Cytoplasmic portion of the chain corresponds to 1–51 (MARKQNRNSKELGLAPLADDTSHAGPPGPGRALLECDHLRSGLPDGRRRKD). The residue at position 9 (S9) is a Phosphoserine. A helical transmembrane segment spans residues 52-72 (WSCSLLVASLAGAFGSSFLYG). The Extracellular portion of the chain corresponds to 73–107 (YNLSVVNAPTPYIKAFYNESWERRHGRPIDPDTLT). Residues N74 and N90 are each glycosylated (N-linked (GlcNAc...) asparagine). The helical transmembrane segment at 108 to 128 (LLWSVTVSIFAIGGLVGTLMV) threads the bilayer. The Cytoplasmic portion of the chain corresponds to 129–140 (KMIGKVLGRKHT). The helical transmembrane segment at 141–161 (LLANNGFAISAALLMACSLQA) threads the bilayer. Topologically, residues 162-171 (GAFEMLIVGR) are extracellular. Residues 172–192 (FIMGIDGGIALSVLPMYLSEI) form a helical membrane-spanning segment. Over 193–200 (SPKEIRGS) the chain is Cytoplasmic. The chain crosses the membrane as a helical span at residues 201–221 (LGQVTAIFICIGVFTGQLLGL). Topologically, residues 222–231 (PELLGKESTW) are extracellular. A helical membrane pass occupies residues 232 to 252 (PYLFGVIVVPAVVQLLSLPFL). Residues 253-316 (PDSPRYLLLE…LRAPYVRWQV (64 aa)) are Cytoplasmic-facing. A helical transmembrane segment spans residues 317–337 (VTVIVTMACYQLCGLNAIWFY). Residues 338–354 (TNSIFGKAGIPPAKIPY) lie on the Extracellular side of the membrane. Residues 355-375 (VTLSTGGIETLAAIFSGLVIE) traverse the membrane as a helical segment. Topologically, residues 376-381 (HLGRRP) are cytoplasmic. Residues 382 to 402 (LLIGGFGLMALFFGTLTVTLT) traverse the membrane as a helical segment. Residues 403-415 (LQDRAPWVPYLSI) are Extracellular-facing. Residues 416–436 (VGILAIIASFCSGPGGIPFIL) traverse the membrane as a helical segment. Residues 437 to 451 (TGEFFQQSQRPAAFI) lie on the Cytoplasmic side of the membrane. The chain crosses the membrane as a helical span at residues 452–472 (IAGTVNWLSNFAVGLLFPFIQ). Topologically, residues 473-478 (KSLDTY) are extracellular. Residues 479–499 (CFLVFATICMTGAIYLYFVLP) form a helical membrane-spanning segment. Over 500-566 (ETKNRTYAEI…YMDDLTFQET (67 aa)) the chain is Cytoplasmic. A Phosphoserine modification is found at S514. Over residues 524-539 (EKIDSAVTDGKTKGRP) the composition is skewed to basic and acidic residues. Residues 524-543 (EKIDSAVTDGKTKGRPEQVS) form a disordered region.

The protein belongs to the major facilitator superfamily. Sugar transporter (TC 2.A.1.1) family.

The protein localises to the basolateral cell membrane. It localises to the apical cell membrane. It carries out the reaction urate(out) = urate(in). Its function is as follows. High-capacity urate transporter, which may play a role in the urate reabsorption by proximal tubules. May have a residual high-affinity, low-capacity glucose and fructose transporter activity. Transports urate at rates 45- to 60-fold faster than glucose. Does not transport galactose. May mediate small uptake of adenine but not of other nucleobases. This chain is Solute carrier family 2, facilitated glucose transporter member 9, found in Pongo abelii (Sumatran orangutan).